The chain runs to 176 residues: Probable inosine/xanthosine triphosphatase (176 aa).

Residue D36 participates in Mg(2+) binding.

This sequence belongs to the YjjX NTPase family. Homodimer. Mg(2+) is required as a cofactor. Mn(2+) serves as cofactor.

It carries out the reaction XTP + H2O = XDP + phosphate + H(+). The catalysed reaction is ITP + H2O = IDP + phosphate + H(+). Phosphatase that hydrolyzes non-canonical purine nucleotides such as XTP and ITP to their respective diphosphate derivatives. Probably excludes non-canonical purines from DNA/RNA precursor pool, thus preventing their incorporation into DNA/RNA and avoiding chromosomal lesions. This is Probable inosine/xanthosine triphosphatase from Saccharolobus islandicus (strain Y.G.57.14 / Yellowstone #1) (Sulfolobus islandicus).